A 402-amino-acid chain; its full sequence is Multidrug resistance protein MdtH (402 aa).

The next 10 membrane-spanning stretches (helical) occupy residues 13–33 (YFLL…FPLI), 34–54 (SIRF…ALGL), 99–116 (PWIL…GTLF), 139–159 (LLMM…SWLL), 165–185 (YVCW…AWLL), 214–234 (VLTL…LPIM), 244–264 (AVKW…YPIA), 277–297 (LMFG…STTL), 340–360 (LGLA…YDMG), and 368–388 (LPWA…YWQF).

It belongs to the major facilitator superfamily. DHA1 family. MdtH (TC 2.A.1.2.21) subfamily.

It is found in the cell inner membrane. The protein is Multidrug resistance protein MdtH of Edwardsiella ictaluri (strain 93-146).